We begin with the raw amino-acid sequence, 366 residues long: Ribosomal RNA large subunit methyltransferase M (366 aa).

Residues S188, 221-224 (CPGG), D240, D260, and D277 contribute to the S-adenosyl-L-methionine site. K306 functions as the Proton acceptor in the catalytic mechanism.

Belongs to the class I-like SAM-binding methyltransferase superfamily. RNA methyltransferase RlmE family. RlmM subfamily. In terms of assembly, monomer.

The protein resides in the cytoplasm. It carries out the reaction cytidine(2498) in 23S rRNA + S-adenosyl-L-methionine = 2'-O-methylcytidine(2498) in 23S rRNA + S-adenosyl-L-homocysteine + H(+). In terms of biological role, catalyzes the 2'-O-methylation at nucleotide C2498 in 23S rRNA. The protein is Ribosomal RNA large subunit methyltransferase M of Dickeya chrysanthemi (strain Ech1591) (Dickeya zeae (strain Ech1591)).